A 449-amino-acid chain; its full sequence is uncharacterized protein (449 aa).

The residue at position 420 (S420) is a Phosphoserine.

Belongs to the NAD kinase family.

The protein localises to the cytoplasm. It is found in the nucleus. This is an uncharacterized protein from Schizosaccharomyces pombe (strain 972 / ATCC 24843) (Fission yeast).